We begin with the raw amino-acid sequence, 921 residues long: Ubiquitin carboxyl-terminal hydrolase 11 (921 aa).

The span at Met1–Ser16 shows a compositional bias: low complexity. The segment at Met1–Asp29 is disordered. Residues Pro28–Ile133 form the DUSP domain. Position 194 is an N6-acetyllysine (Lys194). Positions Cys257–Gln889 constitute a USP domain. Cys266 (nucleophile) is an active-site residue. The segment at Thr592–Gln697 is disordered. Ser596 is subject to Phosphoserine. Residues Asp597 to Glu624 show a composition bias toward acidic residues. Composition is skewed to polar residues over residues Leu657 to Trp666 and Phe676 to Gln697. Ser692 is modified (phosphoserine). His847 functions as the Proton acceptor in the catalytic mechanism. The disordered stretch occupies residues Arg893–Asn921. Residues Gln895 to Ser915 are compositionally biased toward low complexity. Ser906 is modified (phosphoserine).

Belongs to the peptidase C19 family. As to quaternary structure, monomer. Associated component of the Polycomb group (PcG) multiprotein PRC1-like complex. Interacts with RANBP9/RANBPM. Interacts with BRCA2. Interacts with CHUK/IKKA. Interacts with NFKBIA. Interacts with SPRY3, RAE1, MYCBP2/PAM, and KCTD6.

It localises to the nucleus. It is found in the cytoplasm. The protein localises to the chromosome. The enzyme catalyses Thiol-dependent hydrolysis of ester, thioester, amide, peptide and isopeptide bonds formed by the C-terminal Gly of ubiquitin (a 76-residue protein attached to proteins as an intracellular targeting signal).. Functionally, protease that can remove conjugated ubiquitin from target proteins and polyubiquitin chains. Inhibits the degradation of target proteins by the proteasome. Cleaves preferentially 'Lys-6' and 'Lys-63'-linked ubiquitin chains. Has lower activity with 'Lys-11' and 'Lys-33'-linked ubiquitin chains, and extremely low activity with 'Lys-27', 'Lys-29' and 'Lys-48'-linked ubiquitin chains (in vitro). Plays a role in the regulation of pathways leading to NF-kappa-B activation. Plays a role in the regulation of DNA repair after double-stranded DNA breaks. Acts as a chromatin regulator via its association with the Polycomb group (PcG) multiprotein PRC1-like complex; may act by deubiquitinating components of the PRC1-like comple. Promotes cell proliferation by deubiquitinating phosphorylated E2F1x. This chain is Ubiquitin carboxyl-terminal hydrolase 11, found in Rattus norvegicus (Rat).